Here is a 334-residue protein sequence, read N- to C-terminus: Glyceraldehyde-3-phosphate dehydrogenase 2 (334 aa).

Residues 12–13, D35, and R79 each bind NAD(+); that span reads RI. Residues 152–154, T183, R198, 211–212, and R234 each bind D-glyceraldehyde 3-phosphate; these read SCT and SG. The Nucleophile role is filled by C153. An NAD(+)-binding site is contributed by N315.

The protein belongs to the glyceraldehyde-3-phosphate dehydrogenase family. Homotetramer.

The protein localises to the cytoplasm. It catalyses the reaction D-glyceraldehyde 3-phosphate + phosphate + NAD(+) = (2R)-3-phospho-glyceroyl phosphate + NADH + H(+). Its pathway is carbohydrate degradation; glycolysis; pyruvate from D-glyceraldehyde 3-phosphate: step 1/5. Its activity is regulated as follows. Inhibited by pentalenolactone (PL). In terms of biological role, catalyzes the oxidative phosphorylation of glyceraldehyde 3-phosphate (G3P) to 1,3-bisphosphoglycerate (BPG) using the cofactor NAD. The first reaction step involves the formation of a hemiacetal intermediate between G3P and a cysteine residue, and this hemiacetal intermediate is then oxidized to a thioester, with concomitant reduction of NAD to NADH. The reduced NADH is then exchanged with the second NAD, and the thioester is attacked by a nucleophilic inorganic phosphate to produce BPG. The protein is Glyceraldehyde-3-phosphate dehydrogenase 2 (gap2) of Streptomyces arenae.